Reading from the N-terminus, the 362-residue chain is Heat-inducible transcription repressor HrcA (362 aa).

It belongs to the HrcA family.

In terms of biological role, negative regulator of class I heat shock genes (grpE-dnaK-dnaJ and groELS operons). Prevents heat-shock induction of these operons. This Rhizobium rhizogenes (strain K84 / ATCC BAA-868) (Agrobacterium radiobacter) protein is Heat-inducible transcription repressor HrcA.